A 152-amino-acid polypeptide reads, in one-letter code: Ribosome maturation factor RimP (152 aa).

The protein belongs to the RimP family.

It localises to the cytoplasm. Its function is as follows. Required for maturation of 30S ribosomal subunits. The protein is Ribosome maturation factor RimP of Desulfitobacterium hafniense (strain DSM 10664 / DCB-2).